Consider the following 1314-residue polypeptide: Tetratricopeptide repeat protein 21A (1314 aa).

19 TPR repeats span residues 110-143 (STAL…SSGS), 214-247 (LPAL…DENN), 326-359 (ALVA…EENR), 494-527 (MEPL…DPTF), 529-561 (DAHL…NFQV), 565-598 (PLYH…PTSK), 616-649 (ASIL…FSGT), 721-754 (PHSS…NPHD), 755-788 (ASLV…SGQD), 790-821 (LCCE…DSGV), 831-863 (VKCL…QSRI), 883-916 (ASIC…SPTD), 918-950 (KVVL…EQTH), 951-984 (ERAA…APDN), 986-1018 (LVLN…SSRV), 1022-1055 (PGFN…STWG), 1195-1228 (EKSW…NKSC), 1230-1262 (RAYE…SHQA), and 1264-1297 (PAIG…HPKY).

The protein belongs to the TTC21 family. As to quaternary structure, interacts with IFT20. Interacts with IFT52. Interacts with IFT140. Interacts with CEP78; regulating IFT20 stability and localization.

Functionally, intraflagellar transport (IFT)-associated protein required for spermatogenesis. Required for sperm flagellar formation and intraflagellar transport. The polypeptide is Tetratricopeptide repeat protein 21A (Ttc21a) (Mus musculus (Mouse)).